Consider the following 438-residue polypeptide: Transposon Ty2-LR2 Gag polyprotein (438 aa).

Composition is skewed to polar residues over residues 1–11, 19–39, and 49–60; these read MESQQLHQNPH, ASVTSKEVPSNQDPLAVSASN, and KVNSQEETTPGT. Disordered stretches follow at residues 1 to 88, 364 to 397, and 418 to 438; these read MESQ…YQQH, KNVSRTSPNTTNTKVTTRNYHRTNSSKPRAAKAH, and VSSQYLSDDNELSLRPATERI. Residues 295-397 form an RNA-binding region; it reads ENNINVSDRL…SSKPRAAKAH (103 aa). Positions 369 to 381 are enriched in low complexity; the sequence is TSPNTTNTKVTTR.

In terms of assembly, homotrimer.

It localises to the cytoplasm. Functionally, capsid protein (CA) is the structural component of the virus-like particle (VLP), forming the shell that encapsulates the retrotransposons dimeric RNA genome. The particles are assembled from trimer-clustered units and there are holes in the capsid shells that allow for the diffusion of macromolecules. CA also has nucleocapsid-like chaperone activity, promoting primer tRNA(i)-Met annealing to the multipartite primer-binding site (PBS), dimerization of Ty2 RNA and initiation of reverse transcription. The sequence is that of Transposon Ty2-LR2 Gag polyprotein (TY2A-LR2) from Saccharomyces cerevisiae (strain ATCC 204508 / S288c) (Baker's yeast).